Consider the following 753-residue polypeptide: Probable dipeptidyl peptidase 4 (753 aa).

The signal sequence occupies residues 1–18; sequence MKTSQFLSLLLLAGIAQA. 3 N-linked (GlcNAc...) asparagine glycosylation sites follow: N84, N114, and N222. Residues S616, D668, and H703 each act as charge relay system in the active site.

The protein belongs to the peptidase S9B family.

It localises to the secreted. It carries out the reaction Release of an N-terminal dipeptide, Xaa-Yaa-|-Zaa-, from a polypeptide, preferentially when Yaa is Pro, provided Zaa is neither Pro nor hydroxyproline.. In terms of biological role, extracellular dipeptidyl-peptidase which removes N-terminal dipeptides sequentially from polypeptides having unsubstituted N-termini provided that the penultimate residue is proline. Contributes to pathogenicity. This chain is Probable dipeptidyl peptidase 4 (DPP4), found in Trichophyton verrucosum (strain HKI 0517).